The following is a 29-amino-acid chain: Cycloviolacin-O22 (29 aa).

The segment at residues 1–29 (GLPICGETCVGGTCNTPGCTCSWPVCTRN) is a cross-link (cyclopeptide (Gly-Asn)). 3 disulfide bridges follow: Cys-5-Cys-19, Cys-9-Cys-21, and Cys-14-Cys-26.

In terms of processing, this is a cyclic peptide. Expressed in roots and runners but not in leaves, petals and petioles (at protein level).

In terms of biological role, probably participates in a plant defense mechanism. The protein is Cycloviolacin-O22 of Viola odorata (Sweet violet).